We begin with the raw amino-acid sequence, 439 residues long: MVWTSHPVKRLAGAIRAPGDKSCSHRALIFGGLAEGESRFSGLLEGDDVLRTGQAMEAMGATVTRTGPGSWDVTGVGAKGLSSPKGVLDFGNSGTGSRLLMGVMAGYDLTASLTGDASLCSRPMNRVLNPLRQMGLKDTAGPDGKLPFTLTGSKSLKAIRYAPPQASAQVKSAVLLAGLNAEGETVVAEAKATRDHTERMLQGFGATLSFRMAPGGVHEIALKGGQRLRGLDAEIPGDPSSAAFLIAAGLLSPQGDVLVEGVMSNPTRSGFYDVADLMGASLGADERGEAAGERLIDIHSGYAGLKGIHVPERLVASMIDEFPILAVLAAFATGETRVTGAEELRVKESDRIGAVVAMLRVNGVEVEETEDGFTVQGCGGRVPGGGLVETRHDHRIAMSALVMGTAAQKPVSVDDISMIDTSYPEFMSHMATLGADIRS.

3-phosphoshikimate-binding residues include lysine 21, serine 22, and arginine 26. A phosphoenolpyruvate-binding site is contributed by lysine 21. Phosphoenolpyruvate contacts are provided by glycine 94 and arginine 122. Serine 167, glutamine 169, aspartate 320, and lysine 347 together coordinate 3-phosphoshikimate. Glutamine 169 is a phosphoenolpyruvate binding site. The Proton acceptor role is filled by aspartate 320. Phosphoenolpyruvate is bound by residues arginine 351 and arginine 395.

It belongs to the EPSP synthase family. As to quaternary structure, monomer.

Its subcellular location is the cytoplasm. It carries out the reaction 3-phosphoshikimate + phosphoenolpyruvate = 5-O-(1-carboxyvinyl)-3-phosphoshikimate + phosphate. It functions in the pathway metabolic intermediate biosynthesis; chorismate biosynthesis; chorismate from D-erythrose 4-phosphate and phosphoenolpyruvate: step 6/7. Functionally, catalyzes the transfer of the enolpyruvyl moiety of phosphoenolpyruvate (PEP) to the 5-hydroxyl of shikimate-3-phosphate (S3P) to produce enolpyruvyl shikimate-3-phosphate and inorganic phosphate. The polypeptide is 3-phosphoshikimate 1-carboxyvinyltransferase (Hyphomonas neptunium (strain ATCC 15444)).